Reading from the N-terminus, the 663-residue chain is Innate immunity activator protein (663 aa).

A disordered region spans residues 1-73 (MLQMPKLNEI…PGPGWDQCSP (73 aa)). Residues 23 to 47 (EGRWAGPTGPEAARPARGARGQARG) show a composition bias toward low complexity. The segment covering 50–59 (ARWDSWEHSR) has biased composition (basic and acidic residues). Residues 117 to 147 (NAVRKQQRALEARLEACLEELRRLCLREAEL) adopt a coiled-coil conformation. Residues 164–170 (PKVRRRI) carry the Nuclear localization signal (NLS) 1 motif. 2 disordered regions span residues 219-363 (RQRK…SSLW) and 375-405 (IRNV…QSLR). Basic and acidic residues predominate over residues 225–246 (ALQEEKKLRDLQRCLGDRRRNS). Residues 259-272 (ELSASDDSSLSDGL) are compositionally biased toward low complexity. Residues 282–298 (PKPPPESPAPPSRPLPP) show a composition bias toward pro residues. A compositionally biased stretch (basic and acidic residues) spans 327–340 (TSLDHPYEKPRKSS). A Nuclear localization signal (NLS) 2 motif is present at residues 332–338 (PYEKPRK). Residues 349–361 (PATTPQDQPNPSS) are compositionally biased toward polar residues. Positions 422-428 (PRRRPTH) match the Nuclear localization signal (NLS) 3 motif. Residues 448-483 (PACHSCSEDSGSDVSSISHPTSPGSSSPDISFLRPL) are disordered. Over residues 455-475 (EDSGSDVSSISHPTSPGSSSP) the composition is skewed to low complexity.

In terms of assembly, interacts with IRAK1, NOD2 and RIPK2; the interaction takes place upon PRR stimulation. Interacts with YWHAQ/14-3-3T; the interaction increases upon PRR stimulation and is required for cellular signaling pathway activation and cytokine secretion. Interacts (via N-terminal domain) with CYTH1 and CYTH2 (via their N-terminal domains). Interacts with FBXW11 and BTRC; associates with SCF E3 ubiquitin-protein ligase complexes.

It localises to the nucleus. The protein localises to the cytoplasm. Functionally, expressed in peripheral macrophages and intestinal myeloid-derived cells, is required for optimal PRR (pattern recognition receptor)-induced signaling, cytokine secretion, and bacterial clearance. Upon stimulation of a broad range of PRRs (pattern recognition receptor) such as NOD2 or TLR2, TLR3, TLR4, TLR5, TLR7 and TLR9, associates with YWHAQ/14-3-3T, which in turn leads to the recruitment and activation of MAP kinases and NF-kappa-B signaling complexes that amplifies PRR-induced downstream signals and cytokine secretion. In the intestine, regulates adherens junction stability by regulating the degradation of CYTH1 and CYTH2, probably acting as substrate cofactor for SCF E3 ubiquitin-protein ligase complexes. Stabilizes adherens junctions by limiting CYTH1-dependent ARF6 activation. The polypeptide is Innate immunity activator protein (Mus musculus (Mouse)).